Reading from the N-terminus, the 142-residue chain is Large ribosomal subunit protein uL13 (142 aa).

This sequence belongs to the universal ribosomal protein uL13 family. As to quaternary structure, part of the 50S ribosomal subunit.

Its function is as follows. This protein is one of the early assembly proteins of the 50S ribosomal subunit, although it is not seen to bind rRNA by itself. It is important during the early stages of 50S assembly. The chain is Large ribosomal subunit protein uL13 from Xylella fastidiosa (strain M23).